A 466-amino-acid polypeptide reads, in one-letter code: Asparagine--tRNA ligase (466 aa).

This sequence belongs to the class-II aminoacyl-tRNA synthetase family. As to quaternary structure, homodimer.

The protein localises to the cytoplasm. The catalysed reaction is tRNA(Asn) + L-asparagine + ATP = L-asparaginyl-tRNA(Asn) + AMP + diphosphate + H(+). The protein is Asparagine--tRNA ligase of Shewanella sp. (strain MR-4).